The chain runs to 677 residues: MAQVHLTIFIFSSIFVISSSSFIPPPHPFDPLTETELKLVRNIINKSYPIGHNHKFTFQYVGLNEPEKSLVLSWHSSPDRNVKPPPRQAFVIARDKGMSREIVIDFSTRAIVSNKIHVGNGNPMLTIDEQQAATAVVQKYKPFCDSIIKRGLNLSEVVVTSSTMGWFGETKTKRFIRTIPFYLNGSVNTYLRPIEGMTIIVNLDQMKVTGFKDRFTGPMPKANGREYRISKLKPPFGPSLRSAVVFQPDGPGFKIDGHVVRWANWEFHMSFDVRAGLVISLASIFDMDMNRYRQVLYKGHLSEMFVPYMDPNDDWYFISYLDCGEFGCGQTAVSLEPYTDCPPNAAFMDGIFPGQDGTPTKISNVMCIFEKYAGDIMWRHTEAEVPGLKITEVRPDVSLVARMVTTVGNYDYIIEYEFKPSGSIKMGVGLTGVLEVKPVEYVHTSEIKEDDIYGTIVADNTVGVNHDHFVTFRLDLDIDGTENSFVRTELVTKRTPKSVNTPRKSYWTTKRNTAKTEADARVKLGLRAEELVVVNPTKKTKHGNEVGYRLLPGPASSPLLVQDDYPQIRAAFTNYNVWITPYNKSEVWASGLYADRSQGDDTLAVWSQRDREIENKDIVMWYTVGFHHVPCQEDFPTMPTMFGGFELRPTNFFEQNPVLKAKPFNLTTIPKCTTKNE.

Position 320–331 (Y320–T331) interacts with substrate. The Proton acceptor role is filled by D322. A disulfide bond links C341 and C367. A substrate-binding site is contributed by V407–Y412. Y410 acts as the Schiff-base intermediate with substrate; via topaquinone in catalysis. A 2',4',5'-topaquinone modification is found at Y410. H466 and H468 together coordinate Cu cation. The Mn(2+) site is built by D477, D617, and I618. Residue H628 coordinates Cu cation.

Belongs to the copper/topaquinone oxidase family. As to quaternary structure, homodimer. It depends on Cu cation as a cofactor. Requires Zn(2+) as cofactor. The cofactor is L-topaquinone. Topaquinone (TPQ) is generated by copper-dependent autoxidation of a specific tyrosyl residue. In terms of tissue distribution, expressed exclusively in leaves.

It localises to the peroxisome. The enzyme catalyses a primary methyl amine + O2 + H2O = an aldehyde + H2O2 + NH4(+). Its pathway is amine and polyamine degradation; putrescine degradation. Its function is as follows. Copper amine oxidase that can use putrescine and spermidine as substrates. Involved in putrescine catabolism in peroxisomes in response to salt stress. Regulates arginine-dependent nitric oxide (NO) production, a key signaling molecule regulating a wide range of physiological processes including responses to salt stress, by influencing arginine bioavailability. Modulates primary root growth. In Arabidopsis thaliana (Mouse-ear cress), this protein is Amine oxidase [copper-containing] alpha 2, peroxisomal.